The sequence spans 265 residues: Putative Tubby-like protein 4 (265 aa).

In terms of domain architecture, F-box spans 1–44 (MPPELLRDVLMRIERSEDTWPSRKNVVSCVGVCKNWRQIFKEIV). An FBD domain is found at 228-250 (SYELKLALYFAKNSAILKKFVLR).

Belongs to the TUB family.

This Arabidopsis thaliana (Mouse-ear cress) protein is Putative Tubby-like protein 4.